The chain runs to 293 residues: uncharacterized protein (293 aa).

Catalysis depends on charge relay system residues Thr43 and Tyr105. Catalysis depends on Tyr131, which acts as the Proton donor. Lys159 acts as the Schiff-base intermediate with substrate in catalysis.

This sequence belongs to the DapA family. As to quaternary structure, homotetramer.

It localises to the cytoplasm. This is an uncharacterized protein from Thermococcus onnurineus (strain NA1).